The primary structure comprises 158 residues: Small ribosomal subunit protein bS6 (158 aa).

Over residues 92–149 (RVDEHEEGPSAMMRKADRDRERDDRGPREGGFRGDREGRGDRDGFRGDRGPRRPREDA) the composition is skewed to basic and acidic residues. The segment at 92–158 (RVDEHEEGPS…ADAPAAAVEE (67 aa)) is disordered.

Belongs to the bacterial ribosomal protein bS6 family.

Its function is as follows. Binds together with bS18 to 16S ribosomal RNA. This chain is Small ribosomal subunit protein bS6, found in Rhodopseudomonas palustris (strain ATCC BAA-98 / CGA009).